The primary structure comprises 583 residues: Phosphoglucomutase, cytoplasmic (583 aa).

The disordered stretch occupies residues 1–20 (MATFKVSRVETKPYDGQKPG). 2 residues coordinate alpha-D-glucose 1,6-bisphosphate: Arg25 and Ser124. The active-site Phosphoserine intermediate is the Ser124. Ser124, Asp300, Asp302, and Asp304 together coordinate Mg(2+). Residue Ser124 is modified to Phosphoserine. The alpha-D-glucose 1,6-bisphosphate site is built by Asp304, Arg305, Thr368, Glu387, Ser389, and Lys400.

This sequence belongs to the phosphohexose mutase family. Monomer. Mg(2+) is required as a cofactor.

The protein localises to the cytoplasm. The catalysed reaction is alpha-D-glucose 1-phosphate = alpha-D-glucose 6-phosphate. It carries out the reaction O-phospho-L-seryl-[protein] + alpha-D-glucose 1-phosphate = alpha-D-glucose 1,6-bisphosphate + L-seryl-[protein]. It catalyses the reaction alpha-D-glucose 1,6-bisphosphate + L-seryl-[protein] = O-phospho-L-seryl-[protein] + alpha-D-glucose 6-phosphate. Functionally, catalyzes the reversible isomerization of alpha-D-glucose 1-phosphate to alpha-D-glucose 6-phosphate. The mechanism proceeds via the intermediate compound alpha-D-glucose 1,6-bisphosphate. This enzyme participates in both the breakdown and synthesis of glucose. The protein is Phosphoglucomutase, cytoplasmic (PGM1) of Mesembryanthemum crystallinum (Common ice plant).